The primary structure comprises 687 residues: MNPNFSSMIDRYKHQQLRIGSVSPQQISAWATKILPNGEIVGEVKKPYTFLYKTNKPEKDGLFCERIFGPIKSGICACGNYRVIGDEKEEPKFCEQCGVEFIDSRIRRYQMGYIKLACPVTHVWYLKRLPSYIANLLDKPLKELEGLVYCDFSFARPITKKPTFLRLRGLFEYEIQSWKYSIPLFFTTQGFDTFRNREISTGAGAIREQLADLDLRIIIENSLLEWKDLGEEEHTGNEWEDRKVGRRKDFLVRRMELAKHFLRTNIEPEWMVLCLLPVLPPELRPIIQIDGGKLMSSDINELYRRVIYRNNTLTDLLTTSRSTPGELVMCQEKLVQEAVDTLLDNGIRGQPMRDGHNKIYKSFSDLIEGKEGRFRETLLGKRVDYSGRSVIVVGPSLSLHRCGLPREIAIELFQTFVIRGLIRQHLASNIGVAKSKIREKEPIVWEILQEVMQGHPVLLNRAPTLHRLGIQAFQPVLVEGRAICLHPLVCKGFNADFDGDQMAVHVPLSLEAQVEARLLMFSHMNLLSPAIGDPISVPTQDMLIGLYVLTSENRRGICLNRYTKCNRRNSQTKRSDNSNYKYKKEPVFCNSYDAIGAYRQKRINLDSPLWLRWRLDQRVITSRETPIEVHYESLGTYYEIYGHYLIVRSLKKEIIFIYIRTTVGHISLYREIEEAIQGFSRAGSSDT.

Zn(2+)-binding residues include cysteine 76, cysteine 78, cysteine 94, and cysteine 97. Positions 496, 498, and 500 each coordinate Mg(2+).

It belongs to the RNA polymerase beta' chain family. RpoC1 subfamily. As to quaternary structure, in plastids the minimal PEP RNA polymerase catalytic core is composed of four subunits: alpha, beta, beta', and beta''. When a (nuclear-encoded) sigma factor is associated with the core the holoenzyme is formed, which can initiate transcription. The cofactor is Mg(2+). It depends on Zn(2+) as a cofactor.

It localises to the plastid. Its subcellular location is the chloroplast. It carries out the reaction RNA(n) + a ribonucleoside 5'-triphosphate = RNA(n+1) + diphosphate. DNA-dependent RNA polymerase catalyzes the transcription of DNA into RNA using the four ribonucleoside triphosphates as substrates. The polypeptide is DNA-directed RNA polymerase subunit beta' (Ipomoea purpurea (Common morning glory)).